Reading from the N-terminus, the 955-residue chain is UvrABC system protein A (955 aa).

35 to 42 (GLSGSGKS) contacts ATP. 2 consecutive ABC transporter domains span residues 322–601 (WGST…EESI) and 621–951 (GHDN…RYLK). 654-661 (GVSGSGKS) serves as a coordination point for ATP. The segment at 754 to 780 (CEACQGDGLIKIEMHFLPDVYVKCDIC) adopts a C4-type zinc-finger fold.

This sequence belongs to the ABC transporter superfamily. UvrA family. Forms a heterotetramer with UvrB during the search for lesions.

It localises to the cytoplasm. The UvrABC repair system catalyzes the recognition and processing of DNA lesions. UvrA is an ATPase and a DNA-binding protein. A damage recognition complex composed of 2 UvrA and 2 UvrB subunits scans DNA for abnormalities. When the presence of a lesion has been verified by UvrB, the UvrA molecules dissociate. This is UvrABC system protein A from Rickettsia felis (strain ATCC VR-1525 / URRWXCal2) (Rickettsia azadi).